Here is a 239-residue protein sequence, read N- to C-terminus: Phosphoribosylaminoimidazole-succinocarboxamide synthase (239 aa).

Belongs to the SAICAR synthetase family.

It carries out the reaction 5-amino-1-(5-phospho-D-ribosyl)imidazole-4-carboxylate + L-aspartate + ATP = (2S)-2-[5-amino-1-(5-phospho-beta-D-ribosyl)imidazole-4-carboxamido]succinate + ADP + phosphate + 2 H(+). The protein operates within purine metabolism; IMP biosynthesis via de novo pathway; 5-amino-1-(5-phospho-D-ribosyl)imidazole-4-carboxamide from 5-amino-1-(5-phospho-D-ribosyl)imidazole-4-carboxylate: step 1/2. The polypeptide is Phosphoribosylaminoimidazole-succinocarboxamide synthase (Brevibacillus brevis (strain 47 / JCM 6285 / NBRC 100599)).